The sequence spans 195 residues: ADP-ribosylation factor L (195 aa).

Gly-2 carries N-myristoyl glycine lipidation. Residues 25 to 32 (GLENSGKT), 72 to 76 (DLLYP), and 131 to 134 (NKQD) contribute to the GTP site.

The protein belongs to the small GTPase superfamily. Arf family.

Functionally, may be involved in trafficking events within the endosomal system. In Dictyostelium discoideum (Social amoeba), this protein is ADP-ribosylation factor L (arrL).